The chain runs to 128 residues: Large ribosomal subunit protein bL17 (128 aa).

Belongs to the bacterial ribosomal protein bL17 family. As to quaternary structure, part of the 50S ribosomal subunit. Contacts protein L32.

In Klebsiella pneumoniae (strain 342), this protein is Large ribosomal subunit protein bL17.